Consider the following 536-residue polypeptide: Glutamyl-tRNA(Gln) amidotransferase subunit B, mitochondrial (536 aa).

The protein belongs to the GatB/GatE family. GatB subfamily. As to quaternary structure, subunit of the heterotrimeric GatFAB amidotransferase (AdT) complex, composed of A, B and F subunits.

It localises to the mitochondrion. It catalyses the reaction L-glutamyl-tRNA(Gln) + L-glutamine + ATP + H2O = L-glutaminyl-tRNA(Gln) + L-glutamate + ADP + phosphate + H(+). In terms of biological role, allows the formation of correctly charged Gln-tRNA(Gln) through the transamidation of misacylated Glu-tRNA(Gln) in the mitochondria. The reaction takes place in the presence of glutamine and ATP through an activated gamma-phospho-Glu-tRNA(Gln). This chain is Glutamyl-tRNA(Gln) amidotransferase subunit B, mitochondrial, found in Vanderwaltozyma polyspora (strain ATCC 22028 / DSM 70294 / BCRC 21397 / CBS 2163 / NBRC 10782 / NRRL Y-8283 / UCD 57-17) (Kluyveromyces polysporus).